Consider the following 271-residue polypeptide: 2-aminophenol 1,6-dioxygenase alpha subunit (271 aa).

This sequence belongs to the LigB/MhpB extradiol dioxygenase family. In terms of assembly, heterotetramer of 2 alpha and 2 beta subunits.

Its function is as follows. Component of the 2-aminophenol 1,6-dioxygenase complex that catalyzes the ring fission of 2-aminophenol to produce 2-aminomuconic 6-semialdehyde. AmnA seems to have a role in the stability of the complex. The protein is 2-aminophenol 1,6-dioxygenase alpha subunit (amnA) of Pseudomonas sp.